The following is a 140-amino-acid chain: Sex-regulated protein janus-B (140 aa).

Arg42 serves as a coordination point for substrate. Catalysis depends on His69, which acts as the Proton acceptor. 110-112 is a binding site for substrate; sequence CKT.

This sequence belongs to the janus family.

JanA and janB regulate somatic sex differentiation. In Drosophila pseudoobscura pseudoobscura (Fruit fly), this protein is Sex-regulated protein janus-B (janB).